Reading from the N-terminus, the 89-residue chain is Small ribosomal subunit protein uS15 (89 aa).

This sequence belongs to the universal ribosomal protein uS15 family. In terms of assembly, part of the 30S ribosomal subunit. Forms a bridge to the 50S subunit in the 70S ribosome, contacting the 23S rRNA.

Functionally, one of the primary rRNA binding proteins, it binds directly to 16S rRNA where it helps nucleate assembly of the platform of the 30S subunit by binding and bridging several RNA helices of the 16S rRNA. In terms of biological role, forms an intersubunit bridge (bridge B4) with the 23S rRNA of the 50S subunit in the ribosome. The sequence is that of Small ribosomal subunit protein uS15 from Cereibacter sphaeroides (strain ATCC 17025 / ATH 2.4.3) (Rhodobacter sphaeroides).